We begin with the raw amino-acid sequence, 240 residues long: CD302 antigen (240 aa).

One can recognise a C-type lectin domain in the interval 40-160; sequence FQDSCYIFLQ…CEVSSVEGTL (121 aa). N117 carries an N-linked (GlcNAc...) asparagine glycan. A disulfide bridge connects residues C136 and C151. A helical transmembrane segment spans residues 177 to 197; that stretch reads ILISALVIASTVILTVLGAVI. The Cytoplasmic segment spans residues 198–240; sequence WFLYKRNLDSGFTTVFSTAPQSPFNDDCVLVVAEENEYAVQFD.

The protein localises to the membrane. It is found in the cell projection. The protein resides in the filopodium. Its subcellular location is the cytoplasm. It localises to the cell cortex. Potential multifunctional C-type lectin receptor that may play roles in endocytosis and phagocytosis as well as in cell adhesion and migration. The sequence is that of CD302 antigen from Sus scrofa (Pig).